The chain runs to 43 residues: Neurotrophic factor BDNF (43 aa).

This sequence belongs to the NGF-beta family.

The protein localises to the secreted. Functionally, promotes the survival of neuronal populations that are all located either in the central nervous system or directly connected to it. In Macrovipera lebetinus (Levantine viper), this protein is Neurotrophic factor BDNF (BDNF).